Consider the following 141-residue polypeptide: Nuclear transcription factor Y subunit B-1 (141 aa).

Positions 1 to 23 are disordered; the sequence is MADTPSSPAGDGGESGGSVREQD. Alanine 2 is modified (N-acetylalanine). The DNA-binding element occupies 26 to 32; sequence LPIANIS. Residues 53 to 64 form a subunit association domain (SAD) region; sequence VQECVSEFISFI. A disordered region spans residues 114 to 141; that stretch reads DNKGSGKSGDGSNRDAGGGVSGEEMPSW.

This sequence belongs to the NFYB/HAP3 subunit family. In terms of assembly, heterotrimeric transcription factor composed of three components, NF-YA, NF-YB and NF-YC. NF-YB and NF-YC must interact and dimerize for NF-YA association and DNA binding. Binds directly with DPB3-1. In terms of tissue distribution, ubiquitous. Predominantly expressed in leaves, flowers and siliques.

The protein resides in the nucleus. Functionally, component of the NF-Y/HAP transcription factor complex. The NF-Y complex stimulates the transcription of various genes by recognizing and binding to a CCAAT motif in promoters. In Arabidopsis thaliana (Mouse-ear cress), this protein is Nuclear transcription factor Y subunit B-1.